The chain runs to 296 residues: Cytidine deaminase (296 aa).

CMP/dCMP-type deaminase domains lie at 47 to 167 (DSHE…FGPA) and 186 to 296 (ESDD…VDPV). 88–90 (NLE) is a binding site for substrate. His101 contributes to the Zn(2+) binding site. Glu103 acts as the Proton donor in catalysis. Positions 128 and 131 each coordinate Zn(2+).

It belongs to the cytidine and deoxycytidylate deaminase family. As to quaternary structure, homodimer. Requires Zn(2+) as cofactor.

It carries out the reaction cytidine + H2O + H(+) = uridine + NH4(+). The enzyme catalyses 2'-deoxycytidine + H2O + H(+) = 2'-deoxyuridine + NH4(+). In terms of biological role, this enzyme scavenges exogenous and endogenous cytidine and 2'-deoxycytidine for UMP synthesis. This chain is Cytidine deaminase, found in Shewanella amazonensis (strain ATCC BAA-1098 / SB2B).